The chain runs to 542 residues: ATP synthase subunit alpha (542 aa).

173–180 (GDRQTGKT) provides a ligand contact to ATP. The disordered stretch occupies residues 518–542 (PLVEKKPDEKHTTPVEQEKIVAGEK). Basic and acidic residues predominate over residues 519 to 542 (LVEKKPDEKHTTPVEQEKIVAGEK).

This sequence belongs to the ATPase alpha/beta chains family. In terms of assembly, F-type ATPases have 2 components, CF(1) - the catalytic core - and CF(0) - the membrane proton channel. CF(1) has five subunits: alpha(3), beta(3), gamma(1), delta(1), epsilon(1). CF(0) has three main subunits: a(1), b(2) and c(9-12). The alpha and beta chains form an alternating ring which encloses part of the gamma chain. CF(1) is attached to CF(0) by a central stalk formed by the gamma and epsilon chains, while a peripheral stalk is formed by the delta and b chains.

It localises to the cell membrane. It catalyses the reaction ATP + H2O + 4 H(+)(in) = ADP + phosphate + 5 H(+)(out). Produces ATP from ADP in the presence of a proton gradient across the membrane. The alpha chain is a regulatory subunit. The polypeptide is ATP synthase subunit alpha (Bifidobacterium adolescentis (strain ATCC 15703 / DSM 20083 / NCTC 11814 / E194a)).